A 305-amino-acid polypeptide reads, in one-letter code: MKEESKIVTSKFKHTPVLVNQVLEAIAKLPSELLIKGKLIDATIGGGGHSALILKGFPSLHITGLDQDPSAIDAASKQLLHFGSRAEIISSNFADFVPQEEVAFVLADLGVSSPQIDEAKRGFSFRLNGPLDMRMNPKKGLKADELLEKTEEKALADLIYKYGEEKFSRRIARRIKQDLSANGPYEGTSALAYAIAGCYPPKMRNGRIHPATRTFQALRIAINNELDALQHLLQKAPNWLLPGGVFAVISFHSLEDRLVKKSFLTDERLERITRKPIQADSNEKLNNPRSRSAKLRLAKKRNPNE.

Residues 47 to 49 (GGH), Asp-66, Phe-93, Asp-108, and Gln-115 contribute to the S-adenosyl-L-methionine site. The segment at 279 to 305 (ADSNEKLNNPRSRSAKLRLAKKRNPNE) is disordered. The span at 291–305 (RSAKLRLAKKRNPNE) shows a compositional bias: basic residues.

This sequence belongs to the methyltransferase superfamily. RsmH family.

It localises to the cytoplasm. It carries out the reaction cytidine(1402) in 16S rRNA + S-adenosyl-L-methionine = N(4)-methylcytidine(1402) in 16S rRNA + S-adenosyl-L-homocysteine + H(+). Specifically methylates the N4 position of cytidine in position 1402 (C1402) of 16S rRNA. The protein is Ribosomal RNA small subunit methyltransferase H of Prochlorococcus marinus (strain SARG / CCMP1375 / SS120).